Reading from the N-terminus, the 317-residue chain is WD repeat-containing protein 82 (317 aa).

WD repeat units lie at residues 21–60 (ENTDKINAIDFAPNGEHLISCSEDDQIVIYDCEKGTQSRT), 107–146 (GHTKKVISLCISPVEDTFLSGSLDKTLRLWDLRSPNCQGL), 148–186 (HLSGRPIAAYDPEGLIFAAGVNSESIKLYDLRSFDKGPF), 194–233 (EKECDWTGLKFSRDGKTILISTNGSVIRLVDAFHGTPLQT), 238–278 (PNNK…KVSV), and 282–317 (DHPGPVQCVQFNPKYMMLASACTNMAFWLPTSEEGL).

The protein belongs to the WD repeat SWD2 family. In terms of assembly, component of the SET1 complex, composed at least of the catalytic subunit Set1, wds/WDR5, Wdr82, Rbbp5, ash2, Cfp1/CXXC1, hcf and Dpy-30L1. Interacts with male-specific lethal (MSL) histone acetyltransferase complex at least composed of mof, msl-1, msl-2 and msl-3. Interacts with su(sable).

The protein localises to the nucleus. Functionally, component of the SET1 complex that specifically di- and trimethylates 'Lys-4' of histone H3. Together with su(sable), part of a transcription termination checkpoint that promotes transcription termination of aberrant RNAs and their subsequent degradation by the nuclear exosome. This is WD repeat-containing protein 82 from Drosophila melanogaster (Fruit fly).